Consider the following 941-residue polypeptide: Isoleucine--tRNA ligase (941 aa).

The 'HIGH' region signature appears at 58-68 (PYANGDIHIGH). E562 is a binding site for L-isoleucyl-5'-AMP. Positions 603-607 (KMSKS) match the 'KMSKS' region motif. K606 contributes to the ATP binding site. The Zn(2+) site is built by C904, C907, C924, and C927.

The protein belongs to the class-I aminoacyl-tRNA synthetase family. IleS type 1 subfamily. Monomer. Zn(2+) is required as a cofactor.

The protein resides in the cytoplasm. The enzyme catalyses tRNA(Ile) + L-isoleucine + ATP = L-isoleucyl-tRNA(Ile) + AMP + diphosphate. In terms of biological role, catalyzes the attachment of isoleucine to tRNA(Ile). As IleRS can inadvertently accommodate and process structurally similar amino acids such as valine, to avoid such errors it has two additional distinct tRNA(Ile)-dependent editing activities. One activity is designated as 'pretransfer' editing and involves the hydrolysis of activated Val-AMP. The other activity is designated 'posttransfer' editing and involves deacylation of mischarged Val-tRNA(Ile). The sequence is that of Isoleucine--tRNA ligase from Alkalilimnicola ehrlichii (strain ATCC BAA-1101 / DSM 17681 / MLHE-1).